The primary structure comprises 359 residues: D-alanine--D-alanine ligase (359 aa).

The region spanning 141–346 (KRIFKEAGLP…YSTLLDELIN (206 aa)) is the ATP-grasp domain. Residue 172–227 (IEHLGYPCFVKPANLGSSVGITKVHNEEELPGALKLAAKYDRKLLIERGIDAREIE) coordinates ATP. Mg(2+) contacts are provided by Asp-299, Glu-313, and Asn-315.

It belongs to the D-alanine--D-alanine ligase family. Mg(2+) is required as a cofactor. The cofactor is Mn(2+).

It localises to the cytoplasm. It carries out the reaction 2 D-alanine + ATP = D-alanyl-D-alanine + ADP + phosphate + H(+). The protein operates within cell wall biogenesis; peptidoglycan biosynthesis. Its function is as follows. Cell wall formation. The polypeptide is D-alanine--D-alanine ligase (Thermoanaerobacter pseudethanolicus (strain ATCC 33223 / 39E) (Clostridium thermohydrosulfuricum)).